The primary structure comprises 200 residues: MKLMDVHVLFSGGKDSSLSAVILKKLGYNPHLITINFGVIPSYKLAEETAKILGFKHKVITLDRKIVEKAADMIIEHKYPGPAIQYVHKTVLEILADEYSILADGTRRDDRVPKLSYSEIQSLEMRKNIQYITPLMGFGYKTLRHLASEFFILEEIKSGTKLSSDYEAEIRHILKERGESPEKYFPEHKQTRVVGLKKEI.

This is an uncharacterized protein from Methanocaldococcus jannaschii (strain ATCC 43067 / DSM 2661 / JAL-1 / JCM 10045 / NBRC 100440) (Methanococcus jannaschii).